Consider the following 376-residue polypeptide: Proton extrusion protein PxcA (376 aa).

The next 4 helical transmembrane spans lie at 150 to 170 (TLIS…VQQM), 251 to 271 (AVKN…VCII), 299 to 319 (IILF…QVLL), and 334 to 354 (FILL…KYWI).

This sequence belongs to the CemA family.

The protein resides in the cell inner membrane. Required for H(+) efflux immediately after light irradiation to form a rapid H(+) concentration gradient across the thylakoid membranes. Together with PxcL, contributes to transient H(+) uptake following dark to light transition. In Prochlorococcus marinus (strain MIT 9303), this protein is Proton extrusion protein PxcA.